The following is a 41-amino-acid chain: Photosystem I reaction center subunit IX (41 aa).

Residues 7–27 (YLSTAPVVAFAWITITAGLLI) form a helical membrane-spanning segment.

Belongs to the PsaJ family.

The protein localises to the plastid. It is found in the chloroplast thylakoid membrane. May help in the organization of the PsaE and PsaF subunits. This chain is Photosystem I reaction center subunit IX, found in Oedogonium cardiacum (Filamentous green alga).